A 213-amino-acid polypeptide reads, in one-letter code: Outer envelope pore protein 24B, chloroplastic (213 aa).

Topologically, residues 1–3 (MAM) are cytoplasmic. The chain crosses the membrane as a beta stranded span at residues 4–13 (KASIKGKYDT). Residues 14–18 (DKTSG) lie on the Chloroplast intermembrane side of the membrane. A beta stranded transmembrane segment spans residues 19 to 28 (IGSLAFNAGD). Residues 29–32 (IKLR) are Cytoplasmic-facing. A beta stranded membrane pass occupies residues 33 to 42 (ATMTDATLVA). Residues 43-55 (GPTLTGLALAVEK) lie on the Chloroplast intermembrane side of the membrane. Residues 56–64 (PGSFIVEYN) traverse the membrane as a beta stranded segment. Residues 65–70 (VPKKDV) are Cytoplasmic-facing. A beta stranded transmembrane segment spans residues 71-80 (RFQFMNTVRI). The Chloroplast intermembrane segment spans residues 81-93 (AEKPLNLTYIHSR). The chain crosses the membrane as a beta stranded span at residues 94-103 (ADNRTIVDGS). Residues 104–108 (LVIDS) are Cytoplasmic-facing. Residues 109-118 (ANKLSANHMV) form a beta stranded membrane-spanning segment. The Chloroplast intermembrane segment spans residues 119–122 (GTNN). A beta stranded transmembrane segment spans residues 123–132 (CKIKYTYAHG). Topologically, residues 133-144 (GLATFEPCYDLA) are cytoplasmic. Residues 145 to 156 (KNTWDFAVSRRF) form a beta stranded membrane-spanning segment. Residues 157–159 (YSG) lie on the Chloroplast intermembrane side of the membrane. Residues 160 to 168 (DNVRATYQT) form a beta stranded membrane-spanning segment. The Cytoplasmic portion of the chain corresponds to 169 to 170 (SS). The chain crosses the membrane as a beta stranded span at residues 171–179 (KLLGMEWSR). The Chloroplast intermembrane portion of the chain corresponds to 180-201 (NNKASGFKVCASVNLADELKTP). The chain crosses the membrane as a beta stranded span at residues 202–211 (KLTAETTWNL). The Cytoplasmic portion of the chain corresponds to 212 to 213 (EM).

This sequence belongs to the plastid outer envelope porin OEP24 (TC 1.B.28) family. Homooligomers form large rather nonselective pores in plastidial outer membranes.

The protein localises to the plastid. Its subcellular location is the etioplast membrane. The protein resides in the chloroplast outer membrane. Its function is as follows. High-conductance voltage-dependent solute channel with a slight selectivity for cations transporting triosephosphates, dicarboxylic acids, ATP, inorganic phosphate (Pi), sugars, and positively or negatively charged amino acids. The sequence is that of Outer envelope pore protein 24B, chloroplastic (OEP24B) from Arabidopsis thaliana (Mouse-ear cress).